Here is a 329-residue protein sequence, read N- to C-terminus: GTP 3',8-cyclase (329 aa).

Residues 8-234 (AFARKFYYLR…QLRQRSDGPA (227 aa)) form the Radical SAM core domain. R17 serves as a coordination point for GTP. [4Fe-4S] cluster-binding residues include C24 and C28. Y30 serves as a coordination point for S-adenosyl-L-methionine. C31 lines the [4Fe-4S] cluster pocket. Residue R68 participates in GTP binding. Residue G72 coordinates S-adenosyl-L-methionine. Residue T99 coordinates GTP. Position 123 (S123) interacts with S-adenosyl-L-methionine. K160 serves as a coordination point for GTP. Residue M194 coordinates S-adenosyl-L-methionine. [4Fe-4S] cluster is bound by residues C257 and C260. 262–264 (RLR) serves as a coordination point for GTP. C274 provides a ligand contact to [4Fe-4S] cluster.

Belongs to the radical SAM superfamily. MoaA family. Monomer and homodimer. [4Fe-4S] cluster is required as a cofactor.

The catalysed reaction is GTP + AH2 + S-adenosyl-L-methionine = (8S)-3',8-cyclo-7,8-dihydroguanosine 5'-triphosphate + 5'-deoxyadenosine + L-methionine + A + H(+). Its pathway is cofactor biosynthesis; molybdopterin biosynthesis. Catalyzes the cyclization of GTP to (8S)-3',8-cyclo-7,8-dihydroguanosine 5'-triphosphate. The sequence is that of GTP 3',8-cyclase from Salmonella dublin (strain CT_02021853).